Here is a 1342-residue protein sequence, read N- to C-terminus: DNA-directed RNA polymerase subunit beta (1342 aa).

Lysine 1022 and lysine 1200 each carry N6-acetyllysine.

Belongs to the RNA polymerase beta chain family. The RNAP catalytic core consists of 2 alpha, 1 beta, 1 beta' and 1 omega subunit. When a sigma factor is associated with the core the holoenzyme is formed, which can initiate transcription.

It catalyses the reaction RNA(n) + a ribonucleoside 5'-triphosphate = RNA(n+1) + diphosphate. In terms of biological role, DNA-dependent RNA polymerase catalyzes the transcription of DNA into RNA using the four ribonucleoside triphosphates as substrates. The protein is DNA-directed RNA polymerase subunit beta of Shigella flexneri serotype 5b (strain 8401).